Consider the following 454-residue polypeptide: MNPTQKPEPVYDMVILGASGFTGKYVVREALKFLQTPSSSPLKSLALAGRNPTRLTQSLEWAARPNPPPSSVAILTADTSDPDSLRRLCTQTKLILNCVGPFRIHGDPVVSACADSGCDYLDISGEPEFMERMEANYHDRAEETGSLIVSACGFDSIPAELGLLFNAKQWVSPSVPNQIEAYLSLESDKKIAGNFGTYESAVLGVANAEKLKELRRSRPRRPRPTICGPPAKGPTLENQKTIGLWALKLPSADAVVVRRTLTTLTEKPHGLPGINESPEQIQKREAFWSSIKPAHFGVKITSKSLFGIFRYVTLGVSLGLLSKFSFGRWLLLKFPSVFSLGWFQKKGPSEEEVESATFKMWFIGRGYSEESLASQGETKPDLEIITRISGPEIGYITTPITLVQCGLIVLGQRESLVKGGVYTPGIVFGSTDIQQRLEDNGISFELISKIKTQG.

At Met-1 the chain carries N-acetylmethionine. Residues 215-234 form a disordered region; sequence RRSRPRRPRPTICGPPAKGP.

The protein belongs to the saccharopine dehydrogenase family.

It localises to the mitochondrion membrane. The protein is Probable mitochondrial saccharopine dehydrogenase-like oxidoreductase At5g39410 of Arabidopsis thaliana (Mouse-ear cress).